Reading from the N-terminus, the 750-residue chain is Photosystem I P700 chlorophyll a apoprotein A1 (750 aa).

Helical transmembrane passes span 70 to 93 (VFSAHFGQLSIIFLWLSGMYFHGA), 156 to 179 (LYCTAIGALIFAALMLFAGWFHYH), 195 to 219 (LNHHLAGLLGLGSLSWAGHQVHVSL), 291 to 309 (IAHHHLAIAILFLIAGHMY), 346 to 369 (WHAQLSLNLAMLGSLTIVVAHHMY), 385 to 411 (LSLFTHHMWIGGFLIVGAAAHAAIFMV), 433 to 455 (AIISHLNWACIFLGFHSFGLYIH), and 531 to 549 (FLVHHIHAFTIHVTVLILL). Residues Cys573 and Cys582 each contribute to the [4Fe-4S] cluster site. The next 2 membrane-spanning stretches (helical) occupy residues 589 to 610 (HVFLGLFWMYNAISVVIFHFSW) and 664 to 686 (LSAYGLFFLGAHFVWAFSLMFLF). His675 contributes to the chlorophyll a' binding site. Met683 and Tyr691 together coordinate chlorophyll a. Trp692 contributes to the phylloquinone binding site. A helical membrane pass occupies residues 724-744 (AVGVTHYLLGGIATTWAFFLA).

The protein belongs to the PsaA/PsaB family. In terms of assembly, the PsaA/B heterodimer binds the P700 chlorophyll special pair and subsequent electron acceptors. PSI consists of a core antenna complex that captures photons, and an electron transfer chain that converts photonic excitation into a charge separation. The eukaryotic PSI reaction center is composed of at least 11 subunits. The cofactor is P700 is a chlorophyll a/chlorophyll a' dimer, A0 is one or more chlorophyll a, A1 is one or both phylloquinones and FX is a shared 4Fe-4S iron-sulfur center..

It is found in the plastid. The protein resides in the chloroplast thylakoid membrane. It carries out the reaction reduced [plastocyanin] + hnu + oxidized [2Fe-2S]-[ferredoxin] = oxidized [plastocyanin] + reduced [2Fe-2S]-[ferredoxin]. Functionally, psaA and PsaB bind P700, the primary electron donor of photosystem I (PSI), as well as the electron acceptors A0, A1 and FX. PSI is a plastocyanin-ferredoxin oxidoreductase, converting photonic excitation into a charge separation, which transfers an electron from the donor P700 chlorophyll pair to the spectroscopically characterized acceptors A0, A1, FX, FA and FB in turn. Oxidized P700 is reduced on the lumenal side of the thylakoid membrane by plastocyanin. The polypeptide is Photosystem I P700 chlorophyll a apoprotein A1 (Coffea arabica (Arabian coffee)).